The chain runs to 148 residues: Lysozyme C (148 aa).

A signal peptide spans 1-18 (MKVLILLGLVLLSVMVQG). The C-type lysozyme domain occupies 19–148 (KVFERCELAR…VSQYIQGCGV (130 aa)). Disulfide bonds link cysteine 24/cysteine 146, cysteine 48/cysteine 134, cysteine 83/cysteine 99, and cysteine 95/cysteine 113. Residues glutamate 53 and aspartate 71 contribute to the active site.

This sequence belongs to the glycosyl hydrolase 22 family. As to quaternary structure, monomer.

The protein localises to the secreted. It catalyses the reaction Hydrolysis of (1-&gt;4)-beta-linkages between N-acetylmuramic acid and N-acetyl-D-glucosamine residues in a peptidoglycan and between N-acetyl-D-glucosamine residues in chitodextrins.. In terms of biological role, lysozymes have primarily a bacteriolytic function; those in tissues and body fluids are associated with the monocyte-macrophage system and enhance the activity of immunoagents. This is Lysozyme C (LYZ) from Saguinus oedipus (Cotton-top tamarin).